A 97-amino-acid chain; its full sequence is MICOS complex subunit MIC12 (97 aa).

The helical transmembrane segment at 7 to 24 (LTSITAVSSTLAASYYFY) threads the bilayer.

It belongs to the MICOS complex subunit Mic12 family. Component of the mitochondrial contact site and cristae organizing system (MICOS) complex.

It is found in the mitochondrion inner membrane. In terms of biological role, component of the MICOS complex, a large protein complex of the mitochondrial inner membrane that plays crucial roles in the maintenance of crista junctions, inner membrane architecture, and formation of contact sites to the outer membrane. The polypeptide is MICOS complex subunit MIC12 (AIM5) (Zygosaccharomyces rouxii (strain ATCC 2623 / CBS 732 / NBRC 1130 / NCYC 568 / NRRL Y-229)).